The chain runs to 392 residues: Probable glycerol-3-phosphate dehydrogenase 2 (392 aa).

Residues 42-47 (GSGNWG), Phe130, Lys153, and Ala196 contribute to the NAD(+) site. A substrate-binding site is contributed by Lys153. Lys248 serves as the catalytic Proton acceptor. 2 residues coordinate NAD(+): Arg312 and Gln341. 312 to 313 (RN) is a binding site for substrate.

This sequence belongs to the NAD-dependent glycerol-3-phosphate dehydrogenase family. In terms of assembly, homodimer.

Its subcellular location is the cytoplasm. The enzyme catalyses sn-glycerol 3-phosphate + NAD(+) = dihydroxyacetone phosphate + NADH + H(+). This Caenorhabditis elegans protein is Probable glycerol-3-phosphate dehydrogenase 2 (gpdh-2).